The following is a 415-amino-acid chain: PRKCA-binding protein (415 aa).

The PDZ domain maps to 22–105; that stretch reads KVTLQKDAQN…EVTIHYNKLQ (84 aa). Positions 44 and 46 each coordinate Zn(2+). Position 82 is a phosphothreonine (Thr82). The region spanning 144–357 is the AH domain; it reads LCNDGLVKRL…CYAVLRDADV (214 aa). Residues 376–415 form a disordered region; that stretch reads EEFTDGEEEEEEEDTAAGEPSRDTRGAAGPLDKGGSWCDS. Acidic residues predominate over residues 377–391; it reads EFTDGEEEEEEEDTA. The S-palmitoyl cysteine; by DHHC8 moiety is linked to residue Cys413.

Monomer and homodimer. Interacts with CXADR. Interacts presynaptically with the glutamate receptors GRIA2, GRIA3, GRIK3, isoform 3 of GRIA4, isoform A of GRM4, GRM7 and GRM8; with NAPA and NAPB; and with BTG2. The interaction with NAPA and NAPB disrupts the interaction with GRIA2, conducting to the internalization of GRIA2. Interacts with PRKCA; with the amine transporters SLC6A2 and SLC6A3; with the channels ASIC1 and ASIC2; with the GTP-binding proteins ARF1 and ARF3; with the ephrin receptor tyrosine kinases EPHA7, EPHB1 and EPHB2; with ERBB2 and through its PDZ domain with the C-terminal tail of PRLHR. Interacts with UNC5A. Interacts (via AH domain) with NCS1/FREQ; in a calcium-dependent manner. Interacts with F-actin and associates with the ARP2/3 complex. Interacts (via PDZ domain) with ARF1 (activated); the interaction blocks Arp2/3 complex inhibition. Interacts with SORCS3. Post-translationally, phosphorylation at Thr-82 appears to inhibit the interaction with AMPA receptors. In terms of processing, palmitoylation on Cys-413 is essential for long-term synaptic depression (LTD). Ubiquitous.

Its subcellular location is the cytoplasm. The protein resides in the perinuclear region. It is found in the membrane. It localises to the postsynaptic density. The protein localises to the synapse. Its subcellular location is the synaptosome. The protein resides in the cytoskeleton. Functionally, probable adapter protein that bind to and organize the subcellular localization of a variety of membrane proteins containing some PDZ recognition sequence. Involved in the clustering of various receptors, possibly by acting at the receptor internalization level. Plays a role in synaptic plasticity by regulating the trafficking and internalization of AMPA receptors. May be regulated upon PRKCA activation. May regulate ASIC1/ASIC3 channel. Regulates actin polymerization by inhibiting the actin-nucleating activity of the Arp2/3 complex; the function is competitive with nucleation promoting factors and is linked to neuronal morphology regulation and AMPA receptor (AMPAR) endocytosis. Via interaction with the Arp2/3 complex involved in regulation of synaptic plasicity of excitatory synapses and required for spine shrinkage during long-term depression (LTD). Involved in regulation of astrocyte morphology, antagonistic to Arp2/3 complex activator WASL/N-WASP function. The chain is PRKCA-binding protein (PICK1) from Homo sapiens (Human).